The sequence spans 314 residues: Olfactory receptor 4K2 (314 aa).

The Extracellular portion of the chain corresponds to 1–25; sequence MDVGNKSTMSEFVLLGLSNSWELQM. N5 is a glycosylation site (N-linked (GlcNAc...) asparagine). Residues 26–49 traverse the membrane as a helical segment; sequence FFFMVFSLLYVATMVGNSLIVITV. The Cytoplasmic portion of the chain corresponds to 50–57; it reads IVDPHLHS. The helical transmembrane segment at 58–79 threads the bilayer; that stretch reads PMYFLLTNLSIIDMSLASFATP. The Extracellular portion of the chain corresponds to 80 to 100; sequence KMITDYLTGHKTISFDGCLTQ. C97 and C189 are disulfide-bonded. The helical transmembrane segment at 101–120 threads the bilayer; it reads IFFLHLFTGTEIILLMAMSF. The Cytoplasmic portion of the chain corresponds to 121–139; it reads DRYIAICKPLHYASVISPQ. The helical transmembrane segment at 140–158 threads the bilayer; it reads VCVALVVASWIMGVMHSMS. Residues 159–195 are Extracellular-facing; sequence QVIFALTLPFCGPYEVDSFFCDLPVVFQLACVDTYVL. Residues 196–219 form a helical membrane-spanning segment; sequence GLFMISTSGIIALSCFIVLFNSYV. Residues 220-235 lie on the Cytoplasmic side of the membrane; that stretch reads IVLVTVKHHSSRGSSK. Residues 236–258 traverse the membrane as a helical segment; that stretch reads ALSTCTAHFIVVFLFFGPCIFIY. Residues 259-269 are Extracellular-facing; the sequence is MWPLSSFLTDK. A helical membrane pass occupies residues 270–289; sequence ILSVFYTIFTPTLNPIIYTL. Over 290-314 the chain is Cytoplasmic; the sequence is RNQEVKIAMRKLKNRFLNFNKAMPS.

Belongs to the G-protein coupled receptor 1 family.

The protein localises to the cell membrane. In terms of biological role, odorant receptor. The sequence is that of Olfactory receptor 4K2 (OR4K2) from Homo sapiens (Human).